Consider the following 152-residue polypeptide: Small ribosomal subunit protein uS15 (152 aa).

This sequence belongs to the universal ribosomal protein uS15 family. In terms of assembly, part of the 30S ribosomal subunit.

This is Small ribosomal subunit protein uS15 from Methanocorpusculum labreanum (strain ATCC 43576 / DSM 4855 / Z).